Reading from the N-terminus, the 208-residue chain is V-type proton ATPase subunit E (208 aa).

This sequence belongs to the V-ATPase E subunit family.

Produces ATP from ADP in the presence of a proton gradient across the membrane. The sequence is that of V-type proton ATPase subunit E from Chlamydia trachomatis serovar L2 (strain ATCC VR-902B / DSM 19102 / 434/Bu).